The chain runs to 106 residues: UPF0145 protein PP_2873 (106 aa).

This sequence belongs to the UPF0145 family.

This Pseudomonas putida (strain ATCC 47054 / DSM 6125 / CFBP 8728 / NCIMB 11950 / KT2440) protein is UPF0145 protein PP_2873.